Here is a 573-residue protein sequence, read N- to C-terminus: DNA polymerase lambda (573 aa).

The BRCT domain maps to 35–131 (DARGWLSSLR…KLTDTDGFSL (97 aa)). A disordered region spans residues 126 to 235 (TDGFSLSSPK…GPDPAPEALG (110 aa)). Residues 127 to 149 (DGFSLSSPKRSLNEPQPSKSGQD) are compositionally biased toward polar residues. A DNA-binding region spans residues 263-277 (KAYNVQGDKWRALGY). Lys310 acts as the Schiff-base intermediate with DNA in catalysis. The tract at residues 343 to 346 (GTKT) is DNA-binding. DCTP contacts are provided by residues Arg384, 415-418 (SFRR), and 424-427 (GDVD). Residues 418-427 (RGKVTCGDVD) form an involved in primer binding region. Asp425, Asp427, and Asp488 together coordinate Mn(2+). A DNA-binding region spans residues 464–503 (ENGQQQKYLGVCRLPGAGQRHRRLDIIVVPYSEFACALLY). Asn511 serves as a coordination point for dCTP.

This sequence belongs to the DNA polymerase type-X family. As to quaternary structure, interacts with PCNA. Interacts with PAXX; promoting POLL recruitment to double-strand breaks (DSBs) and stimulation of the end-filling activity of POLL. Interacts with XRCC4; promoting POLL recruitment to double-strand breaks (DSBs) and stimulation of the end-filling activity of POLL. Interacts with NHEJ1/XLF; promoting POLL recruitment to double-strand breaks (DSBs) and stimulation of the end-filling activity of POLL. Requires Mn(2+) as cofactor.

The protein localises to the nucleus. It carries out the reaction DNA(n) + a 2'-deoxyribonucleoside 5'-triphosphate = DNA(n+1) + diphosphate. Functionally, DNA polymerase that functions in several pathways of DNA repair. Involved in base excision repair (BER) responsible for repair of lesions that give rise to abasic (AP) sites in DNA. Also contributes to DNA double-strand break repair by non-homologous end joining and homologous recombination. Has both template-dependent and template-independent (terminal transferase) DNA polymerase activities. Also has a 5'-deoxyribose-5-phosphate lyase (dRP lyase) activity. The polypeptide is DNA polymerase lambda (Rattus norvegicus (Rat)).